The chain runs to 709 residues: Elongation factor G (709 aa).

The tr-type G domain maps to 8 to 290 (NRYRNIGISA…AVIQYMPAPQ (283 aa)). GTP contacts are provided by residues 17 to 24 (AHIDAGKT), 88 to 92 (DTPGH), and 142 to 145 (NKMD).

Belongs to the TRAFAC class translation factor GTPase superfamily. Classic translation factor GTPase family. EF-G/EF-2 subfamily.

The protein localises to the cytoplasm. Its function is as follows. Catalyzes the GTP-dependent ribosomal translocation step during translation elongation. During this step, the ribosome changes from the pre-translocational (PRE) to the post-translocational (POST) state as the newly formed A-site-bound peptidyl-tRNA and P-site-bound deacylated tRNA move to the P and E sites, respectively. Catalyzes the coordinated movement of the two tRNA molecules, the mRNA and conformational changes in the ribosome. The sequence is that of Elongation factor G from Psychrobacter sp. (strain PRwf-1).